We begin with the raw amino-acid sequence, 1323 residues long: Tetratricopeptide repeat protein 21 homolog (1323 aa).

TPR repeat units follow at residues 56–89 (VPLAILKGVCLVLLGKIPEAIRHLEAFSNDQNFS), 411–444 (ESPFYYLIASVLAKHSKDKSFENFRQHIENLIEM), 580–613 (SLYHLIKSKTFKKRNENDEALKTLKMALQIPKKE), 667–700 (HQLVIAQAQLYLTKGHTEKALAILRKIQPGQSNF), 702–735 (LSRIRMAEIYLEEKKDKRMFAACYRELLKVEPTP), 736–768 (GSYSLLGDAFMKVQEPEDAINFYEQALKMQSKD), 770–802 (QLAEKIGEAYVMAHLYSKAVNFYESSMNIYKDK), 804–835 (MRLKLANLLLRLKNYEKCEKILRAPLDREPEP), 845–878 (IQFLLLLAECHEMVENIPEAMKDFEKAKSLHNKI), 892–925 (ARICNLQAELYYRRHEFPPAIEVCKQALQFYETD), 927–959 (KSNLLLSRIYKDENKWTLVLQPCQAVLQVDPHN), 961–993 (EANLILADFYYIKSEADHAMTSYITLLNKNPLH), 995–1027 (HALFRVVELYCRKGEHHKADEFLNSARDANPRC), 1031–1064 (AGYSVCRGRFEWYTGDQSQALRCYSRAKDSPNVV), 1203–1236 (EKCWLLMAEIYVGASKWEQAGTYLDQVLKYNCNS), 1238–1270 (RAFELYGQAKEKEQKYVEASKIYEKAFNTTNQK), and 1272–1305 (CSFGYKLAFTLLKTRRLFLCIETCQKVLDINPQY).

It belongs to the TTC21 family.

This Caenorhabditis briggsae protein is Tetratricopeptide repeat protein 21 homolog.